The sequence spans 332 residues: NH(3)-dependent NAD(+) synthetase (332 aa).

Position 48–55 (48–55) interacts with ATP; sequence GLSGGVDS. Asp54 serves as a coordination point for Mg(2+). Deamido-NAD(+) is bound at residue Arg184. ATP is bound at residue Thr204. A Mg(2+)-binding site is contributed by Glu209. Residues Lys217 and Asp224 each contribute to the deamido-NAD(+) site. ATP is bound by residues Lys233 and Thr255.

It belongs to the NAD synthetase family. In terms of assembly, homodimer.

The catalysed reaction is deamido-NAD(+) + NH4(+) + ATP = AMP + diphosphate + NAD(+) + H(+). The protein operates within cofactor biosynthesis; NAD(+) biosynthesis; NAD(+) from deamido-NAD(+) (ammonia route): step 1/1. In terms of biological role, catalyzes the ATP-dependent amidation of deamido-NAD to form NAD. Uses ammonia as a nitrogen source. This Rhizobium rhizogenes (strain K84 / ATCC BAA-868) (Agrobacterium radiobacter) protein is NH(3)-dependent NAD(+) synthetase.